Here is a 342-residue protein sequence, read N- to C-terminus: Trans-3-hydroxy-L-proline dehydratase (342 aa).

The active-site Proton acceptor is the Ser-90. Substrate-binding positions include 91-92 (GS), Asp-251, and 256-257 (GT).

Belongs to the proline racemase family.

It carries out the reaction trans-3-hydroxy-L-proline = 1-pyrroline-2-carboxylate + H2O. Its function is as follows. Catalyzes the dehydration of trans-3-hydroxy-L-proline (t3LHyp) to Delta(1)-pyrroline-2-carboxylate (Pyr2C). Is likely involved in a degradation pathway that converts t3LHyp to L-proline, which would allow P.denitrificans to grow on t3LHyp as a sole carbon source. Displays neither proline racemase activity nor 4-hydroxyproline 2-epimerase activity. The chain is Trans-3-hydroxy-L-proline dehydratase from Paracoccus denitrificans (strain Pd 1222).